The primary structure comprises 773 residues: MAECGASGSGSSGDSLDKSITLPPDEIFRNLENAKRFAIDIGGSLTKLAYYSTVQHKVAKVRSFDHSGKDTEREHEPPYEISVQEEITARLHFIKFENTYIEACLDFIKDHLVNTETKVIQATGGGAYKFKDLIEEKLRLKVDKEDVMTCLIKGCNFVLKNIPHEAFVYQKDSDPEFRFQTNHPHIFPYLLVNIGSGVSIVKVETEDRFEWVGGSSIGGGTFWGLGALLTKTKKFDELLHLASRGQHSNVDMLVRDVYGGAHQTLGLSGNLIASSFGKSATADQEFSKEDMAKSLLHMISNDIGQLACLHARLHSLDRVYFGGFFIRGHPVTMRTITYSINFFSKGEVQALFLRHEGYLGAIGAFLKGAEQDNPNQYSWGENYAGSSGLMSASPELGPAQRARSGTFDLLEMDRLERPLVDLPLLLDPPSYVPDTVDLTDDALARKYWLTCFEEALDGVVKRAVASQPDSVDAAERAEKFRQKYWNKLQTLRQQPFAYGTLTVRSLLDTREHCLNEFNFPDPYSKVKQRENGVALRCFPGVVRSLDALGWEERQLALVKGLLAGNVFDWGAKAVSAVLESDPYFGFEEAKRKLQERPWLVDSYSEWLQRLKGPPHKCALIFADNSGIDIILGVFPFVRELLLRGTEVILACNSGPALNDVTHSESLIVAERIAGMDPVVHSALQEERLLLVQTGSSSPCLDLSRLDKGLAALVRERGADLVVIEGMGRAVHTNYHAALRCESLKLAVIKNAWLAERLGGRLFSVIFKYEVPAE.

Ala-2 carries the post-translational modification N-acetylalanine. Positions 2-402 are pantothenate kinase; the sequence is AECGASGSGS…SPELGPAQRA (401 aa). Acetyl-CoA is bound by residues Ser-196 and Ser-199. Tyr-320 carries the post-translational modification 3'-nitrotyrosine. Phosphoserine is present on residues Ser-393 and Ser-404. The tract at residues 403–773 is 4'-phosphopantetheine phosphatase; it reads RSGTFDLLEM…VIFKYEVPAE (371 aa). At Thr-406 the chain carries Phosphothreonine. Asp-623, Asn-624, and Asp-659 together coordinate Mn(2+). The short motif at 724-728 is the Subfamily II EGMGR motif element; it reads EGMGR.

In the N-terminal section; belongs to the type II pantothenate kinase family. This sequence in the C-terminal section; belongs to the damage-control phosphatase family. Phosphopantetheine phosphatase II subfamily. As to quaternary structure, homodimer. Interacts with PKM. Mn(2+) serves as cofactor. Requires Ni(2+) as cofactor. In terms of tissue distribution, widely expressed with high expression in the muscle. Expressed in the retina and lens epithelium, mainly in ganglion cell layer, outer plexiform layer and retinal pigment layer (at protein level).

The protein resides in the cytoplasm. The catalysed reaction is (R)-4'-phosphopantetheine + H2O = (R)-pantetheine + phosphate. It catalyses the reaction (R)-4'-phosphopantetheine sulfonate + H2O = (R)-pantetheine sulfonate + phosphate. The enzyme catalyses (R)-4'-phospho-S-sulfopantetheine + H2O = (R)-S-sulfopantetheine + phosphate. Activity is strongly promoted by Co(2+), Ni(2+), Mg(2+) and Mn(2+). Activity is inhibited by EDTA. In terms of biological role, phosphatase which shows a preference for 4'-phosphopantetheine and its oxidatively damaged forms (sulfonate or S-sulfonate), providing strong indirect evidence that the phosphatase activity pre-empts damage in the coenzyme A (CoA) pathway. Hydrolyzing excess 4'-phosphopantetheine could constitute a directed overflow mechanism to prevent its oxidation to the S-sulfonate, sulfonate, or other forms. Hydrolyzing 4'-phosphopantetheine sulfonate or S-sulfonate would forestall their conversion to inactive forms of CoA and acyl carrier protein. May play a role in the physiological regulation of CoA intracellular levels. The chain is 4'-phosphopantetheine phosphatase from Homo sapiens (Human).